We begin with the raw amino-acid sequence, 543 residues long: Tetrahydroberberine oxidase (543 aa).

Positions 1–26 (MIPNSSSSSILSLLVLLLFSTSSSWA) are cleaved as a signal peptide. Cys-37 and Cys-97 form a disulfide bridge. 9 N-linked (GlcNAc...) asparagine glycosylation sites follow: Asn-54, Asn-74, Asn-135, Asn-142, Asn-162, Asn-295, Asn-335, Asn-440, and Asn-482. An FAD-binding PCMH-type domain is found at 75-250 (STQKPEFIIT…LSWKVKLVPV (176 aa)). Positions 112–175 (HDVEGLSYVS…NTLGFPAGFC (64 aa)) form a cross-link, 6-(S-cysteinyl)-8alpha-(pros-histidyl)-FAD (His-Cys).

This sequence belongs to the oxygen-dependent FAD-linked oxidoreductase family. It depends on FAD as a cofactor. In terms of processing, the FAD cofactor is bound via a bicovalent 6-S-cysteinyl, 8alpha-N1-histidyl FAD linkage.

It catalyses the reaction (S)-canadine + 2 O2 + H(+) = berberine + 2 H2O2. Catalyzes the oxidation of different tetrahydroprotoberberines, such as (S)-canadine, (S)-scoulerine and (S)-tetrahydropalmatine. This chain is Tetrahydroberberine oxidase, found in Argemone mexicana (Mexican prickly poppy).